A 208-amino-acid polypeptide reads, in one-letter code: Uracil phosphoribosyltransferase (208 aa).

Residues arginine 78, arginine 103, and aspartate 130–serine 138 contribute to the 5-phospho-alpha-D-ribose 1-diphosphate site. Residues isoleucine 193 and glycine 198–alanine 200 each bind uracil. Aspartate 199 serves as a coordination point for 5-phospho-alpha-D-ribose 1-diphosphate.

Belongs to the UPRTase family. Mg(2+) serves as cofactor.

The enzyme catalyses UMP + diphosphate = 5-phospho-alpha-D-ribose 1-diphosphate + uracil. Its pathway is pyrimidine metabolism; UMP biosynthesis via salvage pathway; UMP from uracil: step 1/1. Its activity is regulated as follows. Allosterically activated by GTP. Catalyzes the conversion of uracil and 5-phospho-alpha-D-ribose 1-diphosphate (PRPP) to UMP and diphosphate. This is Uracil phosphoribosyltransferase from Brucella canis (strain ATCC 23365 / NCTC 10854 / RM-666).